The sequence spans 202 residues: HTH-type transcriptional regulator BetI 1 (202 aa).

Residues 8–68 (PIRRRQLIQA…SAMRQILWDL (61 aa)) enclose the HTH tetR-type domain. The H-T-H motif DNA-binding region spans 31 to 50 (TIARIAKRAGVSAGIISHYF).

It functions in the pathway amine and polyamine biosynthesis; betaine biosynthesis via choline pathway [regulation]. Its function is as follows. Repressor involved in the biosynthesis of the osmoprotectant glycine betaine. It represses transcription of the choline transporter BetT and the genes of BetAB involved in the synthesis of glycine betaine. The sequence is that of HTH-type transcriptional regulator BetI 1 from Chromohalobacter salexigens (strain ATCC BAA-138 / DSM 3043 / CIP 106854 / NCIMB 13768 / 1H11).